A 481-amino-acid polypeptide reads, in one-letter code: Glutamate--tRNA ligase (481 aa).

A 'HIGH' region motif is present at residues 9-19; the sequence is PSPTGNLHIGT. Positions 249–253 match the 'KMSKS' region motif; that stretch reads KLSKR. Lys-252 is an ATP binding site.

The protein belongs to the class-I aminoacyl-tRNA synthetase family. Glutamate--tRNA ligase type 1 subfamily. In terms of assembly, monomer.

The protein resides in the cytoplasm. The enzyme catalyses tRNA(Glu) + L-glutamate + ATP = L-glutamyl-tRNA(Glu) + AMP + diphosphate. Catalyzes the attachment of glutamate to tRNA(Glu) in a two-step reaction: glutamate is first activated by ATP to form Glu-AMP and then transferred to the acceptor end of tRNA(Glu). This Picosynechococcus sp. (strain ATCC 27264 / PCC 7002 / PR-6) (Agmenellum quadruplicatum) protein is Glutamate--tRNA ligase.